We begin with the raw amino-acid sequence, 419 residues long: Carboxypeptidase A1 (419 aa).

Residues 1 to 16 (MKRLLVLSVLLAAVFG) form the signal peptide. Positions 17–110 (NENFVGHQVL…KQQMSAFQAR (94 aa)) are cleaved as a propeptide — activation peptide. The 294-residue stretch at 121-414 (TYHTLDEIYE…LALLTIMDHT (294 aa)) folds into the Peptidase M14 domain. The Zn(2+) site is built by His179 and Glu182. Substrate-binding positions include 179-182 (HSRE), Arg237, and 254-255 (NR). A disulfide bond links Cys248 and Cys271. Zn(2+) is bound at residue His306. Residues 307 to 308 (SY) and Tyr358 contribute to the substrate site. The active-site Proton donor/acceptor is Glu380.

It belongs to the peptidase M14 family. As to quaternary structure, monomer. It depends on Zn(2+) as a cofactor.

The protein resides in the secreted. The catalysed reaction is Release of a C-terminal amino acid, but little or no action with -Asp, -Glu, -Arg, -Lys or -Pro.. Its function is as follows. Carboxypeptidase that catalyzes the release of a C-terminal amino acid, but has little or no action with -Asp, -Glu, -Arg, -Lys or -Pro. This chain is Carboxypeptidase A1 (Cpa1), found in Mus musculus (Mouse).